A 339-amino-acid polypeptide reads, in one-letter code: Ketol-acid reductoisomerase (NADP(+)) (339 aa).

Positions 1-182 (MKVYYDSDAD…GGGRSGVIET (182 aa)) constitute a KARI N-terminal Rossmann domain. NADP(+) is bound by residues 24–27 (YGSQ), Arg-48, Ser-51, Ser-53, and 83–86 (DEHQ). His-108 is an active-site residue. Gly-134 contacts NADP(+). Residues 183–328 (TFREEVETDL…ARLRKMMPWI (146 aa)) form the KARI C-terminal knotted domain. Mg(2+)-binding residues include Asp-191, Glu-195, Glu-227, and Glu-231. A substrate-binding site is contributed by Ser-252.

The protein belongs to the ketol-acid reductoisomerase family. The cofactor is Mg(2+).

It carries out the reaction (2R)-2,3-dihydroxy-3-methylbutanoate + NADP(+) = (2S)-2-acetolactate + NADPH + H(+). The enzyme catalyses (2R,3R)-2,3-dihydroxy-3-methylpentanoate + NADP(+) = (S)-2-ethyl-2-hydroxy-3-oxobutanoate + NADPH + H(+). Its pathway is amino-acid biosynthesis; L-isoleucine biosynthesis; L-isoleucine from 2-oxobutanoate: step 2/4. It functions in the pathway amino-acid biosynthesis; L-valine biosynthesis; L-valine from pyruvate: step 2/4. Its function is as follows. Involved in the biosynthesis of branched-chain amino acids (BCAA). Catalyzes an alkyl-migration followed by a ketol-acid reduction of (S)-2-acetolactate (S2AL) to yield (R)-2,3-dihydroxy-isovalerate. In the isomerase reaction, S2AL is rearranged via a Mg-dependent methyl migration to produce 3-hydroxy-3-methyl-2-ketobutyrate (HMKB). In the reductase reaction, this 2-ketoacid undergoes a metal-dependent reduction by NADPH to yield (R)-2,3-dihydroxy-isovalerate. The sequence is that of Ketol-acid reductoisomerase (NADP(+)) from Zymomonas mobilis subsp. mobilis (strain ATCC 31821 / ZM4 / CP4).